The chain runs to 649 residues: Quinol oxidase subunit 1 (649 aa).

Topologically, residues M1–L15 are extracellular. A helical membrane pass occupies residues I16–L34. Topologically, residues T35–L56 are cytoplasmic. The chain crosses the membrane as a helical span at residues G57–G75. Residues L76 to E97 lie on the Extracellular side of the membrane. A helical membrane pass occupies residues I98–G117. Position 102 (H102) interacts with Fe(II)-heme a. The Cytoplasmic segment spans residues L118–N139. A helical transmembrane segment spans residues L140–V157. Over I158–L190 the chain is Extracellular. The helical transmembrane segment at Q191–L209 threads the bilayer. The Cytoplasmic segment spans residues K210 to T227. A helical transmembrane segment spans residues T228–L246. Topologically, residues A247–A272 are extracellular. A helical membrane pass occupies residues N273–G292. H280 and Y284 together coordinate Cu cation. Positions H280–Y284 form a cross-link, 1'-histidyl-3'-tyrosine (His-Tyr). Topologically, residues I293–S315 are cytoplasmic. Residues I316–G335 form a helical membrane-spanning segment. Residues H329 and H330 each coordinate Cu cation. The Extracellular portion of the chain corresponds to N336–F343. A helical transmembrane segment spans residues F344–W362. Residues L363–M377 lie on the Cytoplasmic side of the membrane. A helical membrane pass occupies residues L378–L397. At A398–Q405 the chain is on the extracellular side. A helical membrane pass occupies residues Y406–V425. Residue H415 coordinates heme a3. A Fe(II)-heme a-binding site is contributed by H417. The Cytoplasmic segment spans residues F426–F452. A helical membrane pass occupies residues F453–L472. The Extracellular segment spans residues Q473–T490. Residues L491–C510 form a helical membrane-spanning segment. Residues Y511–S584 lie on the Cytoplasmic side of the membrane. A helical membrane pass occupies residues N585–V604. The Extracellular portion of the chain corresponds to F605–M610. A helical transmembrane segment spans residues G611–N631. The Cytoplasmic segment spans residues G632–E649.

This sequence belongs to the heme-copper respiratory oxidase family. Requires Cu cation as cofactor. Ferriheme a serves as cofactor. The cofactor is Heme A3..

It localises to the cell membrane. The catalysed reaction is 2 a quinol + O2 = 2 a quinone + 2 H2O. It functions in the pathway energy metabolism; oxidative phosphorylation. Catalyzes quinol oxidation with the concomitant reduction of oxygen to water. Major component for energy conversion during vegetative growth. The sequence is that of Quinol oxidase subunit 1 (qoxB) from Bacillus subtilis (strain 168).